The following is a 37-amino-acid chain: Fructose-bisphosphate aldolase A (37 aa).

It belongs to the class I fructose-bisphosphate aldolase family. As to quaternary structure, tetramer.

It carries out the reaction beta-D-fructose 1,6-bisphosphate = D-glyceraldehyde 3-phosphate + dihydroxyacetone phosphate. It participates in carbohydrate degradation; glycolysis; D-glyceraldehyde 3-phosphate and glycerone phosphate from D-glucose: step 4/4. Functionally, plays a key role in glycolysis and gluconeogenesis. The protein is Fructose-bisphosphate aldolase A of Thunnus albacares (Yellowfin tuna).